A 444-amino-acid chain; its full sequence is MGSGDLNMKKSWHPQRSGNVAATQKAEAEAIAERKKLQQRLQEIEEERRKEEIQKALEAAGGKRKIDRVEWMYSGPTDGQAGDSAETEAYLLGKRRIDKLLQDNDTKKALSKQSQQDVLSAAGPAPVVTNARDVATKIREDPLLAIKRQEQQAYEAMMNDPIKRRQLLASMGIDDSQIAAKGGKEQRRHKHRSHHHRSDRHRDRDDDRDRDSARDRDRDRHSRRRRSDSRDRSRSRSPRRRSDSEEDRSKQRRRDSPDRTRRRDRDQSRSRGNRDRDDDRSRRHRFPQGRSRSRSGSPGGRSSRRREYSRERDSGGPSSRRDDRNSRDQNRPRRDYAKEDEQPKYDGGLNKGGRRQQQPDGDHKNAEEERAKKLAAMQAAATDLDKAREERLKALAEAERAEREADEKARQQNKKFRGGDAGFMSGLHSRAADMKIADRMNGRV.

Disordered regions lie at residues 1–27 (MGSGDLNMKKSWHPQRSGNVAATQKAE), 168–385 (LASM…TDLD), and 397–425 (EAERAEREADEKARQQNKKFRGGDAGFMS). Residues 19 to 65 (NVAATQKAEAEAIAERKKLQQRLQEIEEERRKEEIQKALEAAGGKRK) are a coiled coil. The segment covering 186 to 199 (QRRHKHRSHHHRSD) has biased composition (basic residues). Basic and acidic residues-rich tracts occupy residues 200-220 (RHRDRDDDRDRDSARDRDRDR) and 228-281 (DSRD…DDRS). Residues 282–293 (RRHRFPQGRSRS) are compositionally biased toward basic residues. 3 stretches are compositionally biased toward basic and acidic residues: residues 305 to 344 (RREYSRERDSGGPSSRRDDRNSRDQNRPRRDYAKEDEQPK), 360 to 372 (DGDHKNAEEERAK), and 397 to 410 (EAERAEREADEKAR). The stretch at 364-417 (KNAEEERAKKLAAMQAAATDLDKAREERLKALAEAERAEREADEKARQQNKKFR) forms a coiled coil.

It belongs to the CWC25 family. Associated with the spliceosome.

The protein localises to the nucleus. Functionally, involved in pre-mRNA splicing. The polypeptide is Pre-mRNA-splicing factor cwc25 (msp-6) (Neurospora crassa (strain ATCC 24698 / 74-OR23-1A / CBS 708.71 / DSM 1257 / FGSC 987)).